Consider the following 891-residue polypeptide: DNA mismatch repair protein MutS (891 aa).

632–639 serves as a coordination point for ATP; the sequence is GPNMAGKS.

The protein belongs to the DNA mismatch repair MutS family.

Its function is as follows. This protein is involved in the repair of mismatches in DNA. It is possible that it carries out the mismatch recognition step. This protein has a weak ATPase activity. The polypeptide is DNA mismatch repair protein MutS (Rhodopirellula baltica (strain DSM 10527 / NCIMB 13988 / SH1)).